The sequence spans 317 residues: Protein phosphatase 1 regulatory subunit 3C (317 aa).

The short motif at 84 to 87 (RVVF) is the PP1-binding motif element. Residues 141-263 (PSSDYLSFRD…YRIVHVQWKP (123 aa)) form an interaction with EPM2A region. The CBM21 domain maps to 149–257 (RDRFQKNFVC…NNEAQNYRIV (109 aa)).

Interacts with PPP1CC catalytic subunit of PP1 and associates with glycogen. Forms complexes with glycogen phosphorylase, glycogen synthase and phosphorylase kinase which is necessary for its regulation of PP1 activity. Also interacts with EPM2A/laforin. Post-translationally, ubiquitinated by NHLRC1/malin in a EPM2A/laforin-dependent manner.

In terms of biological role, acts as a glycogen-targeting subunit for PP1 and regulates its activity. Activates glycogen synthase, reduces glycogen phosphorylase activity and limits glycogen breakdown. Dramatically increases basal and insulin-stimulated glycogen synthesis upon overexpression in a variety of cell types. This chain is Protein phosphatase 1 regulatory subunit 3C, found in Rattus norvegicus (Rat).